A 906-amino-acid chain; its full sequence is Protein translocase subunit SecA (906 aa).

ATP contacts are provided by residues Q86, 104-108 (GEGKT), and D511. Composition is skewed to basic and acidic residues over residues 853-865 (HESV…RHDE) and 877-888 (VRREGPKVKRND). Residues 853-906 (HESVIDNNQRHDEDEQEEAPKVQQVRREGPKVKRNDPCPCGSGKKYKQCHGKVE) form a disordered region. Zn(2+) is bound by residues C890, C892, C901, and H902. Positions 896–906 (KKYKQCHGKVE) are enriched in basic residues.

Belongs to the SecA family. As to quaternary structure, monomer and homodimer. Part of the essential Sec protein translocation apparatus which comprises SecA, SecYEG and auxiliary proteins SecDF-YajC and YidC. Zn(2+) is required as a cofactor.

The protein localises to the cell inner membrane. The protein resides in the cytoplasm. The catalysed reaction is ATP + H2O + cellular proteinSide 1 = ADP + phosphate + cellular proteinSide 2.. Functionally, part of the Sec protein translocase complex. Interacts with the SecYEG preprotein conducting channel. Has a central role in coupling the hydrolysis of ATP to the transfer of proteins into and across the cell membrane, serving both as a receptor for the preprotein-SecB complex and as an ATP-driven molecular motor driving the stepwise translocation of polypeptide chains across the membrane. This chain is Protein translocase subunit SecA, found in Francisella tularensis subsp. holarctica (strain OSU18).